A 155-amino-acid chain; its full sequence is uncharacterized protein (155 aa).

The span at 28–38 shows a compositional bias: basic and acidic residues; it reads KKGKDRPREDG. The interval 28–52 is disordered; that stretch reads KKGKDRPREDGTQQQPSESKGEAAC.

This is an uncharacterized protein from Dryophytes versicolor (chameleon treefrog).